The primary structure comprises 1037 residues: Ras guanine nucleotide exchange factor E (1037 aa).

Residues 5 to 35 adopt a coiled-coil conformation; that stretch reads ECNNRIEYLQNKVLELESLNENLKGQLEYFQ. Disordered stretches follow at residues 65-100, 114-150, 166-387, 414-437, 451-472, 602-628, 907-935, and 1004-1037; these read NNNN…TTNN, TNSN…ELSN, TTTT…PLSN, TVNM…LYHS, SSLS…LTNP, INSN…NQLE, NTTT…QQLN, and EKET…SFKS. Low complexity-rich tracts occupy residues 114 to 145 and 166 to 200; these read TNSN…NNSN and TTTT…NNNN. A compositionally biased stretch (polar residues) spans 229–239; sequence PTSSRNSPTNK. Residues 240 to 276 are compositionally biased toward low complexity; that stretch reads SSPQFLSPLSKSPLSQSTQSTTVSSPSPSWTTTVPQS. The span at 282 to 300 shows a compositional bias: polar residues; sequence TIVQSKSPYSPDTNISNKL. The span at 318–360 shows a compositional bias: low complexity; that stretch reads SPSKNSPRSLNSNNNNSSATTSITTPPTTSTPTPTTSTTTTTT. Over residues 361-370 the composition is skewed to basic and acidic residues; it reads TERRPEDRRS. 2 stretches are compositionally biased toward polar residues: residues 372–387 and 424–437; these read TSPF…PLSN and PRSN…LYHS. The N-terminal Ras-GEF domain occupies 496–694; that stretch reads NGFIVKGGTI…NLKRLLTNDR (199 aa). Residues 726–1003 enclose the Ras-GEF domain; that stretch reads DPTEIARQLT…YKLSLICEPK (278 aa). The span at 907–930 shows a compositional bias: low complexity; that stretch reads NTTTTTTTTTTTTTTNTTTSNNNN. The span at 1027–1037 shows a compositional bias: polar residues; it reads SVTSLLNSFKS.

Functionally, promotes the exchange of Ras-bound GDP by GTP. Seems to play a role in chemotaxis. The polypeptide is Ras guanine nucleotide exchange factor E (gefE) (Dictyostelium discoideum (Social amoeba)).